A 137-amino-acid chain; its full sequence is ATP synthase epsilon chain (137 aa).

It belongs to the ATPase epsilon chain family. As to quaternary structure, F-type ATPases have 2 components, CF(1) - the catalytic core - and CF(0) - the membrane proton channel. CF(1) has five subunits: alpha(3), beta(3), gamma(1), delta(1), epsilon(1). CF(0) has three main subunits: a, b and c.

The protein localises to the cellular thylakoid membrane. Functionally, produces ATP from ADP in the presence of a proton gradient across the membrane. This chain is ATP synthase epsilon chain (atpC), found in Nostoc sp. (strain PCC 7120 / SAG 25.82 / UTEX 2576).